The following is a 685-amino-acid chain: DNA ligase (685 aa).

NAD(+) is bound by residues 47-51 (DSEYD), 96-97 (SL), and E125. K127 serves as the catalytic N6-AMP-lysine intermediate. NAD(+) contacts are provided by R148, E185, K304, and K328. Zn(2+) is bound by residues C422, C425, C440, and C446. The 81-residue stretch at 605 to 685 (ADAQPLKGQT…ALLALFAANR (81 aa)) folds into the BRCT domain.

This sequence belongs to the NAD-dependent DNA ligase family. LigA subfamily. It depends on Mg(2+) as a cofactor. Mn(2+) is required as a cofactor.

The catalysed reaction is NAD(+) + (deoxyribonucleotide)n-3'-hydroxyl + 5'-phospho-(deoxyribonucleotide)m = (deoxyribonucleotide)n+m + AMP + beta-nicotinamide D-nucleotide.. Its function is as follows. DNA ligase that catalyzes the formation of phosphodiester linkages between 5'-phosphoryl and 3'-hydroxyl groups in double-stranded DNA using NAD as a coenzyme and as the energy source for the reaction. It is essential for DNA replication and repair of damaged DNA. The chain is DNA ligase from Shewanella sp. (strain W3-18-1).